Reading from the N-terminus, the 44-residue chain is Photosystem I reaction center subunit IX (44 aa).

Residues F9–I29 form a helical membrane-spanning segment.

This sequence belongs to the PsaJ family.

The protein localises to the cellular thylakoid membrane. May help in the organization of the PsaE and PsaF subunits. The sequence is that of Photosystem I reaction center subunit IX from Prochlorococcus marinus (strain MIT 9301).